The primary structure comprises 84 residues: Beta-cardiotoxin CTX9 (84 aa).

A signal peptide spans 1–21 (MKTLLLTLVVVTIVCLDLGYT). 4 disulfide bridges follow: Cys24/Cys43, Cys36/Cys61, Cys65/Cys76, and Cys77/Cys82.

It belongs to the three-finger toxin family. Short-chain subfamily. Aminergic toxin sub-subfamily. In terms of tissue distribution, expressed by the venom gland.

The protein resides in the secreted. Acts as a beta-blocker by binding to beta-1 and beta-2 adrenergic receptors (ADRB1 and ADRB2). It dose-dependently decreases the heart rate (bradycardia), whereas conventional cardiotoxins increases it. At 100 mg/kg, intraperitoneal injection into mice provokes labored breathing, impaired locomotion, lack of response to external stimuli, and death (after 30 minutes). This is Beta-cardiotoxin CTX9 from Ophiophagus hannah (King cobra).